The primary structure comprises 203 residues: Probable proteasome subunit beta type-4 (203 aa).

It belongs to the peptidase T1B family. The 26S proteasome consists of a 20S proteasome core and two 19S regulatory subunits. The 20S proteasome core is composed of 28 subunits that are arranged in four stacked rings, resulting in a barrel-shaped structure. The two end rings are each formed by seven alpha subunits, and the two central rings are each formed by seven beta subunits. The catalytic chamber with the active sites is on the inside of the barrel.

The protein resides in the cytoplasm. The protein localises to the nucleus. Non-catalytic component of the proteasome, a multicatalytic proteinase complex which is characterized by its ability to cleave peptides with Arg, Phe, Tyr, Leu, and Glu adjacent to the leaving group at neutral or slightly basic pH. The proteasome has an ATP-dependent proteolytic activity. The polypeptide is Probable proteasome subunit beta type-4 (pcb-4) (Neurospora crassa (strain ATCC 24698 / 74-OR23-1A / CBS 708.71 / DSM 1257 / FGSC 987)).